The following is a 231-amino-acid chain: NKG2-C type II integral membrane protein (231 aa).

The span at 1 to 12 (MNKQRGTFSEVS) shows a compositional bias: polar residues. Residues 1-31 (MNKQRGTFSEVSLAQDPKRQQRKPKDNKSSI) form a disordered region. Topologically, residues 1–70 (MNKQRGTFSE…CQGLLPPPEK (70 aa)) are cytoplasmic. Basic and acidic residues predominate over residues 16-28 (DPKRQQRKPKDNK). Residues 71–93 (LTAEVLGIICIVLMATVLKTVVL) form a helical; Signal-anchor for type II membrane protein membrane-spanning segment. The Extracellular portion of the chain corresponds to 94-231 (IPFLEQNNSF…SKRYYCKHKL (138 aa)). Asn100 carries an N-linked (GlcNAc...) asparagine glycan. Residues 116–229 (HCPEEWITYS…GSSKRYYCKH (114 aa)) enclose the C-type lectin domain. 3 disulfides stabilise this stretch: Cys117–Cys128, Cys145–Cys227, and Cys206–Cys219. Residue Asn149 is glycosylated (N-linked (GlcNAc...) asparagine).

As to quaternary structure, heterodimer with KLRD1; disulfide-linked. KLRD1-KLRC2 receptor complex interacts with TYROBP/DAP12 homodimer; this interaction is necessary for the expression on the cell surface. In terms of tissue distribution, natural killer cells.

It is found in the cell membrane. Its function is as follows. Immune activating receptor involved in self-nonself discrimination. In complex with KLRD1 on cytotoxic lymphocyte subsets, recognizes non-classical major histocompatibility MHC-E loaded with signal sequence-derived peptides from non-classical MHC-G molecules, likely playing a role in the generation and effector functions of adaptive natural killer (NK) cells and in maternal-fetal tolerance during pregnancy. Regulates the effector functions of terminally differentiated cytotoxic lymphocyte subsets, and in particular may play a role in adaptive NK cell response to viral infection. Upon MHC-E-peptide binding, transmits intracellular signals via the adapter protein TYROBP/DAP12, triggering the phosphorylation of proximal signaling molecules and cell activation. In Macaca mulatta (Rhesus macaque), this protein is NKG2-C type II integral membrane protein (KLRC2).